A 62-amino-acid polypeptide reads, in one-letter code: Translational regulator CsrA (62 aa).

It belongs to the CsrA/RsmA family. As to quaternary structure, homodimer; the beta-strands of each monomer intercalate to form a hydrophobic core, while the alpha-helices form wings that extend away from the core.

It is found in the cytoplasm. A key translational regulator that binds mRNA to regulate translation initiation and/or mRNA stability. Mediates global changes in gene expression, shifting from rapid growth to stress survival by linking envelope stress, the stringent response and the catabolite repression systems. Usually binds in the 5'-UTR; binding at or near the Shine-Dalgarno sequence prevents ribosome-binding, repressing translation, binding elsewhere in the 5'-UTR can activate translation and/or stabilize the mRNA. Its function is antagonized by small RNA(s). The protein is Translational regulator CsrA of Pasteurella multocida (strain Pm70).